The following is a 288-amino-acid chain: Polyisoprenoid diphosphate/phosphate phosphohydrolase PLPP6 (288 aa).

Residues 1-82 (MPSPKARSGS…STGGGGQQLP (82 aa)) form a disordered region. The Cytoplasmic portion of the chain corresponds to 1–127 (MPSPKARSGS…EDSSWGSVRP (127 aa)). A helical transmembrane segment spans residues 128-148 (LMKLIEVSGHGIPWLAGAAYC). The Lumenal segment spans residues 149-161 (LYKSDSPAGQEVM). The chain crosses the membrane as a helical span at residues 162-182 (LNLLMALVLDVVLVGVLKAVV). Positions 179–187 (KAVVRRRRP) are phosphatase sequence motif I. The Cytoplasmic segment spans residues 183-223 (RRRRPAHNRMDMFATFSVDSYSFPSGHATRAAMCARFLLNH). The tract at residues 206 to 209 (PSGH) is phosphatase sequence motif II. The Proton donors role is filled by H209. The helical transmembrane segment at 224–244 (LVLAAPLRVLVLLWATIVGFS) threads the bilayer. The tract at residues 244–255 (SRVLLGRHNVTD) is phosphatase sequence motif III. The Lumenal portion of the chain corresponds to 245–255 (RVLLGRHNVTD). Catalysis depends on H251, which acts as the Nucleophile. A helical transmembrane segment spans residues 256–276 (VAFGFFMGYWQYNLVEMLWLS). At 277–288 (PVMLQSAIGQLH) the chain is on the cytoplasmic side.

The protein belongs to the PA-phosphatase related phosphoesterase family.

Its subcellular location is the endoplasmic reticulum membrane. The protein resides in the nucleus envelope. It localises to the nucleus inner membrane. It carries out the reaction presqualene diphosphate + H2O = presqualene phosphate + phosphate + H(+). It catalyses the reaction presqualene phosphate + H2O = presqualene alcohol + phosphate. The enzyme catalyses (2E,6E)-farnesyl diphosphate + H2O = (2E,6E)-farnesyl phosphate + phosphate + H(+). The catalysed reaction is (2E,6E)-farnesyl phosphate + H2O = (2E,6E)-farnesol + phosphate. It carries out the reaction (2E,6E,10E)-geranylgeranyl diphosphate + H2O = (2E,6E,10E)-geranylgeranyl phosphate + phosphate + H(+). It catalyses the reaction (2E,6E,10E)-geranylgeranyl phosphate + H2O = (2E,6E,10E)-geranylgeraniol + phosphate. The enzyme catalyses (2E)-geranyl diphosphate + H2O = (2E)-geranyl phosphate + phosphate + H(+). The catalysed reaction is (2E)-geranyl phosphate + H2O = (2E)-geraniol + phosphate. It carries out the reaction 1,2-dihexadecanoyl-sn-glycero-3-phosphate + H2O = 1,2-dihexadecanoyl-sn-glycerol + phosphate. In terms of biological role, magnesium-independent polyisoprenoid diphosphatase that catalyzes the sequential dephosphorylation of presqualene, farnesyl, geranyl and geranylgeranyl diphosphates. May regulate the biosynthesis of cholesterol and related sterols by dephosphorylating presqualene and farnesyl diphosphate, two key intermediates in this biosynthetic pathway. May also play a role in protein prenylation by acting on farnesyl diphosphate and its derivative geranylgeranyl diphosphate, two precursors for the addition of isoprenoid anchors to membrane proteins. Has a lower activity towards phosphatidic acid (PA), but through phosphatidic acid dephosphorylation may participate in the biosynthesis of phospholipids and triacylglycerols. May also act on ceramide-1-P, lysophosphatidic acid (LPA) and sphing-4-enine 1-phosphate/sphingosine-1-phosphate. In Danio rerio (Zebrafish), this protein is Polyisoprenoid diphosphate/phosphate phosphohydrolase PLPP6 (plpp6).